Here is a 356-residue protein sequence, read N- to C-terminus: tRNA-specific 2-thiouridylase MnmA (356 aa).

ATP contacts are provided by residues 6-13 (AMSGGVDS) and L32. Residue C101 is the Nucleophile of the active site. A disulfide bridge links C101 with C193. G125 provides a ligand contact to ATP. The interval 143 to 145 (KDQ) is interaction with tRNA. C193 (cysteine persulfide intermediate) is an active-site residue.

Belongs to the MnmA/TRMU family.

It localises to the cytoplasm. The enzyme catalyses S-sulfanyl-L-cysteinyl-[protein] + uridine(34) in tRNA + AH2 + ATP = 2-thiouridine(34) in tRNA + L-cysteinyl-[protein] + A + AMP + diphosphate + H(+). Catalyzes the 2-thiolation of uridine at the wobble position (U34) of tRNA, leading to the formation of s(2)U34. In Mycolicibacterium smegmatis (strain ATCC 700084 / mc(2)155) (Mycobacterium smegmatis), this protein is tRNA-specific 2-thiouridylase MnmA.